Reading from the N-terminus, the 442-residue chain is U11/U12 small nuclear ribonucleoprotein 65 kDa protein (442 aa).

In terms of domain architecture, RRM 1 spans 28–102; that stretch reads VTLLVRHLPD…KVLQVQRANK (75 aa). Disordered stretches follow at residues 101–138, 200–242, and 290–317; these read NKPN…QILS, LALP…GRKR, and SKVT…DSNL. Residues 102–116 are compositionally biased toward basic and acidic residues; that stretch reads KPNDNKKSRQIEESV. The span at 117–136 shows a compositional bias: polar residues; sequence TKGNAFSTVSTNNDSKSGQI. Over residues 200 to 209 the composition is skewed to pro residues; the sequence is LALPTPPLPK. Positions 297–307 are enriched in acidic residues; the sequence is YKEESENEDPA. Residues 352–434 form the RRM 2 domain; sequence VVLYIKNLAK…KPMIIQFGRT (83 aa).

Component of the U11/U12 snRNPs that are part of the U12-type spliceosome. Forms a complex with U12 snRNA. As to expression, ubiquitous.

The protein localises to the nucleus. Component of minor spliceosome required for U12-type intron splicing and alternative splicing of many introns. Binds specifically to U12 snRNA, which is necessary for branch-point site recognition. Required for normal plant development. This is U11/U12 small nuclear ribonucleoprotein 65 kDa protein (SNRNP65) from Arabidopsis thaliana (Mouse-ear cress).